Reading from the N-terminus, the 216-residue chain is Peroxiredoxin (216 aa).

One can recognise a Thioredoxin domain in the interval isoleucine 2–isoleucine 158. Cysteine 46 (cysteine sulfenic acid (-SOH) intermediate) is an active-site residue. Arginine 121 provides a ligand contact to substrate. Cysteine 205 and cysteine 211 are joined by a disulfide.

This sequence belongs to the peroxiredoxin family. Prx6 subfamily. Homodecamer. Pentamer of dimers that assemble into a ring structure.

The protein localises to the cytoplasm. The enzyme catalyses a hydroperoxide + [thioredoxin]-dithiol = an alcohol + [thioredoxin]-disulfide + H2O. Functionally, thiol-specific peroxidase that catalyzes the reduction of hydrogen peroxide and organic hydroperoxides to water and alcohols, respectively. Plays a role in cell protection against oxidative stress by detoxifying peroxides. The sequence is that of Peroxiredoxin from Pyrococcus furiosus (strain ATCC 43587 / DSM 3638 / JCM 8422 / Vc1).